A 623-amino-acid polypeptide reads, in one-letter code: (-)-alpha-pinene synthase 1, chloroplastic (623 aa).

The transit peptide at 1–52 (MDLISVLPSASKSCVCLHKPLSSSTHKLKPFCKTIRILGMPRRWKFAGPSMS) directs the protein to the chloroplast. 3 residues coordinate Mg(2+): D374, D378, and D526. A DDXXD motif motif is present at residues 374-378 (DDMYD).

The protein belongs to the terpene synthase family. Tpsd subfamily. It depends on Mg(2+) as a cofactor. Mn(2+) serves as cofactor.

Its subcellular location is the plastid. The protein resides in the chloroplast. It catalyses the reaction (2E)-geranyl diphosphate = (1S,5S)-alpha-pinene + diphosphate. It carries out the reaction (2E)-geranyl diphosphate = (1S,5S)-beta-pinene + diphosphate. The catalysed reaction is (2E)-geranyl diphosphate = (-)-beta-phellandrene + diphosphate. It functions in the pathway terpene metabolism; oleoresin biosynthesis. Its pathway is secondary metabolite biosynthesis; terpenoid biosynthesis. Functionally, monoterpene synthase (TPS) involved in the biosynthesis of monoterpene natural products included in conifer oleoresin secretions and volatile emissions; these compounds contribute to biotic and abiotic stress defense against herbivores and pathogens. Catalyzes the conversion of (2E)-geranyl diphosphate (GPP) to (-)-alpha-pinene and (-)-beta-pinene, and, to a lower extent, to (-)-beta-phellandrene. The polypeptide is (-)-alpha-pinene synthase 1, chloroplastic (Pinus banksiana (Jack pine)).